A 676-amino-acid chain; its full sequence is Protein timeless (676 aa).

Positions 77–108 (VNTLQKLLNLWFEASLSESSEDNESNTSPPKK) are necessary for normal circadian rhythm. Disordered regions lie at residues 94 to 145 (ESSE…CDER) and 346 to 398 (PESI…LVKR). Composition is skewed to low complexity over residues 101–129 (SNTS…SDNG) and 360–369 (QGKPQHQKPP). The Nuclear localization signal motif lies at 388 to 398 (KELRRKKLVKR).

The protein belongs to the timeless family. Forms a heterodimer with period (PER); the complex then translocates into the nucleus. Post-translationally, phosphorylated with a circadian rhythmicity.

The protein resides in the nucleus. Its subcellular location is the cytoplasm. The protein localises to the perinuclear region. Functionally, required for the production of circadian rhythms. The biological cycle depends on the rhythmic formation and nuclear localization of the TIM-PER complex. Light induces the degradation of TIM, which promotes elimination of PER. Nuclear activity of the heterodimer coordinatively regulates PER and TIM transcription through a negative feedback loop. Behaves as a negative element in circadian transcriptional loop. Does not appear to bind DNA, suggesting indirect transcriptional inhibition. The chain is Protein timeless (tim) from Drosophila hydei (Fruit fly).